The following is a 381-amino-acid chain: Alkanesulfonate monooxygenase (381 aa).

The protein belongs to the SsuD family. As to quaternary structure, homotetramer.

The enzyme catalyses an alkanesulfonate + FMNH2 + O2 = an aldehyde + FMN + sulfite + H2O + 2 H(+). Functionally, catalyzes the desulfonation of aliphatic sulfonates. In Escherichia coli O81 (strain ED1a), this protein is Alkanesulfonate monooxygenase.